Consider the following 147-residue polypeptide: Deoxyuridine 5'-triphosphate nucleotidohydrolase (147 aa).

Substrate is bound by residues 63-65 (RSG), asparagine 76, and 80-82 (TID).

The protein belongs to the dUTPase family. Mg(2+) is required as a cofactor.

It catalyses the reaction dUTP + H2O = dUMP + diphosphate + H(+). It participates in pyrimidine metabolism; dUMP biosynthesis; dUMP from dCTP (dUTP route): step 2/2. Functionally, this enzyme is involved in nucleotide metabolism: it produces dUMP, the immediate precursor of thymidine nucleotides and it decreases the intracellular concentration of dUTP so that uracil cannot be incorporated into DNA. The chain is Deoxyuridine 5'-triphosphate nucleotidohydrolase from Chlamydia felis (strain Fe/C-56) (Chlamydophila felis).